Reading from the N-terminus, the 384-residue chain is MKLTLKRKFIAVLALTSLLGACSLFKNERRFEPAKLADIKQSIVVNTVWQTSIGSGGSAGFAPVYADNSIFAATPDGTVVRVNAENGNIAWSTKLDTKLTSGVGVGDGLVIVTDRKAKAYALNAQTGEKVWDTELSTISTMPPIAGFGKVIVRADDFRVQAFDSKDGKLHWSFVRTNPILSLKTNSRMALINNAVIVAVPTGKLVSLNLNDGTVNWEIHSASAKGPSDIDSVTDVVGQPLVFNDGVCTSSYQGNITCYSIKNSRLTPVWFEPFSSAVGLGYDNNIIYGASIDGTVAAFSLANGQIAWSDQTLINRGLTNPVVYQNYLYVGDLDGLIHVYDTKSGSLVGRFSVGSSKDIVSPLLPTDKGVVVQNGSGTLMLIRAN.

The signal sequence occupies residues 1–21 (MKLTLKRKFIAVLALTSLLGA). Residue Cys-22 is the site of N-palmitoyl cysteine attachment. Cys-22 carries the S-diacylglycerol cysteine lipid modification.

It belongs to the BamB family. Part of the Bam complex.

The protein localises to the cell outer membrane. Its function is as follows. Part of the outer membrane protein assembly complex, which is involved in assembly and insertion of beta-barrel proteins into the outer membrane. This chain is Outer membrane protein assembly factor BamB, found in Taylorella asinigenitalis (strain MCE3).